We begin with the raw amino-acid sequence, 47 residues long: Single-stranded DNA-binding protein (47 aa).

Homodimer in the absence of DNA, monomer when binding DNA.

In terms of biological role, binds preferentially to single-stranded DNA and therefore, destabilizes double-stranded DNA. It is involved in DNA replication, repair and recombination. Binds ss-DNA as the replication fork advances and stimulates the replisome processivity and accuracy. In Escherichia coli (Bacteriophage RB6), this protein is Single-stranded DNA-binding protein (32).